We begin with the raw amino-acid sequence, 163 residues long: ATP synthase subunit b 1 (163 aa).

Residues 7–27 (AETWVAVAFVILMALFAYLGV) traverse the membrane as a helical segment.

Belongs to the ATPase B chain family. F-type ATPases have 2 components, F(1) - the catalytic core - and F(0) - the membrane proton channel. F(1) has five subunits: alpha(3), beta(3), gamma(1), delta(1), epsilon(1). F(0) has three main subunits: a(1), b(2) and c(10-14). The alpha and beta chains form an alternating ring which encloses part of the gamma chain. F(1) is attached to F(0) by a central stalk formed by the gamma and epsilon chains, while a peripheral stalk is formed by the delta and b chains.

It is found in the cell inner membrane. F(1)F(0) ATP synthase produces ATP from ADP in the presence of a proton or sodium gradient. F-type ATPases consist of two structural domains, F(1) containing the extramembraneous catalytic core and F(0) containing the membrane proton channel, linked together by a central stalk and a peripheral stalk. During catalysis, ATP synthesis in the catalytic domain of F(1) is coupled via a rotary mechanism of the central stalk subunits to proton translocation. In terms of biological role, component of the F(0) channel, it forms part of the peripheral stalk, linking F(1) to F(0). The sequence is that of ATP synthase subunit b 1 from Rhodopseudomonas palustris (strain BisB5).